The primary structure comprises 362 residues: Formyltransferase/hydrolase complex Fhc subunit B (362 aa).

Octaheteromer. Part of the formyltransferase/hydrolase complex fhc; composed of FhcA, FhcB, FhcC and FhcD.

It localises to the cytoplasm. Its pathway is one-carbon metabolism; formaldehyde degradation; formate from formaldehyde (H(4)MPT route): step 4/5. In terms of biological role, involved in the transformation of 5-formyl tetrahydromethanopterin (5-formyl-H(4)MPT) to methanofuran (MFR) and formate via the formylmethanofuran (formyl-MFR). This chain is Formyltransferase/hydrolase complex Fhc subunit B (fhcB), found in Methylorubrum extorquens (strain ATCC 14718 / DSM 1338 / JCM 2805 / NCIMB 9133 / AM1) (Methylobacterium extorquens).